Here is a 792-residue protein sequence, read N- to C-terminus: MKKRQSQTPQEYTAEAIKAVSGLEHVRLRPAMYIGDIGERGLHHLIWEILDNAVDEAVAGYARNISVTIHRDNSVTVEDDGRGIPVDIHPETGKPAVEMVFTMLGAGGKFEKKVYTYSGGLHGVGASVVNALSEWLIVEVYRDGKIYRMAFKRGEVVEPLHVVGETKKRGTKVSFKPDPEIFETTEIKFDIVEKRVRELAYLNPEVKFELTDERLGKHLIYKFDRGIEELVKYLNEGKEPLFKDIIRIQGEKEGVIVDIAFQYVKDYKERIESFVNNIKTVEGGTHVTGFRSGLSKAVIRMAQGLKLAKELKKSFTGEDVREGLTAVVACKVPNPQFEGQTKTKLGNQNVKQIVESITYDFLTSYFEKKRDVLKAIVEKAIEAALAREAAKKAKELVRRKSPLEEGVLPGKLADCSETDPSKCEIFLVEGDSAGGSAKQARDRRYQAILPLRGKIINVEKARIDKVLSNDEIKAIVSALGCGIGEDLDLKKLRYHKIILMTDADVDGSHIRTLLLTFFYRFMPKLVEEGYVYIAEPPLYRVKKGKKEIYIKDDKEFEHFLLNEIREKGRLVDAREKEFKGEELVRLLIDLKDYEDAYRALVKSKGENLVNFLLTHRVREEDLRNPARVKEITHLMEEELGDYRVDTKYNELEGAYDIIFYDDKLGTKTIIDVNFLSSLSYREVLEGIHLHLPVQVFFENKKVEINSLGEIYDKFMDFARSGMEVQRYKGLGEMNPEQLWETTMNPKTRRLKKVKIEDAAEADRIFTILMGEQVEPRREFIEAYAKEVKHLDV.

A Toprim domain is found at 423 to 537; the sequence is CEIFLVEGDS…EGYVYIAEPP (115 aa). Mg(2+)-binding residues include Glu-429, Asp-502, and Asp-504.

This sequence belongs to the type II topoisomerase GyrB family. As to quaternary structure, heterotetramer, composed of two GyrA and two GyrB chains. In the heterotetramer, 'GyrA' contains the active site tyrosine that forms a transient covalent intermediate with DNA, while 'GyrB' binds cofactors and catalyzes ATP hydrolysis. Mg(2+) is required as a cofactor. It depends on Mn(2+) as a cofactor. Ca(2+) serves as cofactor.

Its subcellular location is the cytoplasm. It catalyses the reaction ATP-dependent breakage, passage and rejoining of double-stranded DNA.. Its function is as follows. A type II topoisomerase. Despite its similarity to DNA gyrase, this enzyme is not able to supercoil DNA, and instead acts like topoisomerase IV. Relaxes both positively and negatively supercoiled DNA in an ATP-dependent fashion, decatenates interlocked circles. If this subunit is reconstituted with GyrA from E.coli the hybrid enzyme supercoils relaxed plasmid DNA; if paired with E.coli ParC supercoiling is not restored. This the first bacteria shown to not contain DNA gyrase, although it has 2 copies of a reverse gyrase that introduces positive supercoils. Type II topoisomerases break and join 2 DNA strands simultaneously in an ATP-dependent manner. This chain is Type 2 topoisomerase subunit B, found in Aquifex aeolicus (strain VF5).